The chain runs to 397 residues: Probable peptidoglycan glycosyltransferase FtsW (397 aa).

Residues 1 to 18 are Cytoplasmic-facing; sequence MSALTLTASKNTQTMTLD. A helical membrane pass occupies residues 19-39; it reads LPLLGSALALAAIGLIMVTSA. At 40 to 58 the chain is on the periplasmic side; sequence SVDFADDANGQALYYMWRH. A helical membrane pass occupies residues 59–79; sequence LTYLLAGVAVGFVILRLPLEW. Residues 80–83 are Cytoplasmic-facing; sequence WHKQ. Residues 84–104 form a helical membrane-spanning segment; the sequence is SWLLLVVALGFLVAVLIPGIG. The Periplasmic segment spans residues 105–112; that stretch reads RTVNGSTR. A helical membrane pass occupies residues 113-133; that stretch reads WISLGVINIQASEIAKVCLAI. At 134 to 148 the chain is on the cytoplasmic side; the sequence is YTASYLVRRLDEVRG. The helical transmembrane segment at 149–169 threads the bilayer; the sequence is SWWGFAKPLLVLMLVALLLLM. The Periplasmic segment spans residues 170 to 172; sequence EPD. The helical transmembrane segment at 173-193 threads the bilayer; it reads FGALVVTMCAVVGMIFLSGVA. Residues 194-196 are Cytoplasmic-facing; the sequence is LSR. The helical transmembrane segment at 197-217 threads the bilayer; the sequence is FAALLMFCVGSVALLAVSQPY. Topologically, residues 218–272 are periplasmic; sequence RLKRLTAYTDPWADQFDSGYQLTQALIAFGRGEWSGVGLGNSVQKLFYLPEAHTD. The chain crosses the membrane as a helical span at residues 273 to 293; sequence FVFAIIAEELGLLGSLLIIVL. Topologically, residues 294 to 316 are cytoplasmic; that stretch reads FGVLLWRGMYVSRVAERAGQLFN. The chain crosses the membrane as a helical span at residues 317–337; sequence AYAGYGVTLLLGGQALINLGV. Residues 338 to 348 are Periplasmic-facing; sequence NTGLLPTKGLT. A helical membrane pass occupies residues 349–369; the sequence is LPLISYGGSSLIISCLCVAIL. The Cytoplasmic portion of the chain corresponds to 370–397; that stretch reads LRIGSEAVSGEQTEDESPKVKNRGGAQR.

The protein belongs to the SEDS family. FtsW subfamily.

The protein resides in the cell inner membrane. It carries out the reaction [GlcNAc-(1-&gt;4)-Mur2Ac(oyl-L-Ala-gamma-D-Glu-L-Lys-D-Ala-D-Ala)](n)-di-trans,octa-cis-undecaprenyl diphosphate + beta-D-GlcNAc-(1-&gt;4)-Mur2Ac(oyl-L-Ala-gamma-D-Glu-L-Lys-D-Ala-D-Ala)-di-trans,octa-cis-undecaprenyl diphosphate = [GlcNAc-(1-&gt;4)-Mur2Ac(oyl-L-Ala-gamma-D-Glu-L-Lys-D-Ala-D-Ala)](n+1)-di-trans,octa-cis-undecaprenyl diphosphate + di-trans,octa-cis-undecaprenyl diphosphate + H(+). Its pathway is cell wall biogenesis; peptidoglycan biosynthesis. Peptidoglycan polymerase that is essential for cell division. The protein is Probable peptidoglycan glycosyltransferase FtsW of Hahella chejuensis (strain KCTC 2396).